The sequence spans 501 residues: Beta-secretase 1 (501 aa).

An N-terminal signal peptide occupies residues 1-21 (MAPALHWLLLWVGSGMLPAQG). A propeptide spanning residues 22-45 (THLGIRLPLRSGLAGPPLGLRLPR) is cleaved from the precursor. Over 22–457 (THLGIRLPLR…PQTDESTLMT (436 aa)) the chain is Extracellular. The interval 39-58 (LGLRLPRETDEESEEPGRRG) is disordered. The Peptidase A1 domain maps to 75–416 (YYVEMTVGSP…DRARKRIGFA (342 aa)). The active site involves D93. The residue at position 126 (K126) is an N6-acetyllysine. N153, N172, and N223 each carry an N-linked (GlcNAc...) asparagine glycan. 3 disulfides stabilise this stretch: C216-C420, C278-C443, and C330-C380. N6-acetyllysine occurs at positions 275, 279, and 285. Residue D289 is part of the active site. K299, K300, and K307 each carry N6-acetyllysine. A glycan (N-linked (GlcNAc...) asparagine) is linked at N354. Residues 458-478 (IAYVMAAICALFMLPLCLMVC) form a helical membrane-spanning segment. S-palmitoyl cysteine attachment occurs at residues C474, C478, C482, and C485. Over 479 to 501 (QWRCLRCLRHQHDDFADDISLLK) the chain is Cytoplasmic. Residues 479-501 (QWRCLRCLRHQHDDFADDISLLK) form an interaction with RTN3 region. The DXXLL motif lies at 496-500 (DISLL). At S498 the chain carries Phosphoserine. K501 is covalently cross-linked (Glycyl lysine isopeptide (Lys-Gly) (interchain with G-Cter in ubiquitin)).

This sequence belongs to the peptidase A1 family. Monomer. Interacts (via DXXLL motif) with GGA1, GGA2 and GGA3 (via their VHS domain); the interaction highly increases when BACE1 is phosphorylated at Ser-498. Interacts with RTN1; RTN2; RTN3 and RTN4; the interaction leads to inhibition of amyloid precursor protein processing. Interacts with SNX6. Interacts with PCSK9. Interacts with NAT8 and NAT8B. Interacts with BIN1. Interacts (via extracellular domain) with ADAM10 (via extracellular domain). Interacts with SORL1; this interaction may affect binding with APP and hence reduce APP cleavage. Interacts with NRDC AND NRG1. N-Glycosylated. Addition of a bisecting N-acetylglucosamine by MGAT3 blocks lysosomal targeting, further degradation and is required for maintaining stability under stress conditions. Post-translationally, palmitoylation mediates lipid raft localization. In terms of processing, acetylated in the endoplasmic reticulum at Lys-126, Lys-275, Lys-279, Lys-285, Lys-299, Lys-300 and Lys-307. Acetylation by NAT8 and NAT8B is transient and deacetylation probably occurs in the Golgi. Acetylation regulates the maturation, the transport to the plasma membrane, the stability and the expression of the protein. Ubiquitinated at Lys-501, ubiquitination leads to lysosomal degradation. Monoubiquitinated and 'Lys-63'-linked polyubitinated. Deubiquitnated by USP8; inhibits lysosomal degradation. Post-translationally, phosphorylation at Ser-498 is required for interaction with GGA1 and retrograded transport from endosomal compartments to the trans-Golgi network. Non-phosphorylated BACE1 enters a direct recycling route to the cell surface. In terms of tissue distribution, expressed in the brain, specifically in neurons and astrocytes (at protein level).

It is found in the cell membrane. The protein localises to the golgi apparatus. Its subcellular location is the trans-Golgi network. It localises to the endoplasmic reticulum. The protein resides in the endosome. It is found in the late endosome. The protein localises to the early endosome. Its subcellular location is the cell surface. It localises to the cytoplasmic vesicle membrane. The protein resides in the membrane raft. It is found in the lysosome. The protein localises to the recycling endosome. Its subcellular location is the cell projection. It localises to the axon. The protein resides in the dendrite. The enzyme catalyses Broad endopeptidase specificity. Cleaves Glu-Val-Asn-Leu-|-Asp-Ala-Glu-Phe in the Swedish variant of Alzheimer's amyloid precursor protein.. Its activity is regulated as follows. Inhibited by RTN3 and RTN4. Responsible for the proteolytic processing of the amyloid precursor protein (APP). Cleaves at the N-terminus of the A-beta peptide sequence, between residues 671 and 672 of APP, leads to the generation and extracellular release of beta-cleaved soluble APP, and a corresponding cell-associated C-terminal fragment which is later released by gamma-secretase. Cleaves CHL1. The sequence is that of Beta-secretase 1 from Mus musculus (Mouse).